The following is a 134-amino-acid chain: Protein LctB (134 aa).

This is Protein LctB (lctB) from Geobacillus stearothermophilus (Bacillus stearothermophilus).